Reading from the N-terminus, the 136-residue chain is Lymphocyte antigen 6E (136 aa).

An N-terminal signal peptide occupies residues 1–26 (MSATSNMRVFLPVLLAALLGMEQVHS). The region spanning 27 to 118 (LMCFSCTDQK…AGLGLRASIP (92 aa)) is the UPAR/Ly6 domain. Cystine bridges form between C29–C54, C32–C41, C47–C76, C80–C98, and C99–C104. An N-linked (GlcNAc...) asparagine glycan is attached at N105. Residue A108 is the site of GPI-anchor amidated alanine attachment. The propeptide at 109-136 (AGLGLRASIPLLGLGLLLSLLALLQLSP) is removed in mature form.

As to quaternary structure, interacts with CHRNA4. Interacts with CD3Z/CD247. As to expression, ubiquitously expressed in mouse adult tissues with maximal expression in the lung and the salivary gland. Expression is strikingly lower in the fetal tissues except for the placenta. Present in thymus where its expression is observed in immature thymocytes and thymic stromal cells. Also found on functionally active T-cells as well as B-cells and thymic dendritic cells.

The protein resides in the cell membrane. GPI-anchored cell surface protein that regulates T-lymphocytes proliferation, differentiation, and activation. Regulates the T-cell receptor (TCR) signaling by interacting with component CD3Z/CD247 at the plasma membrane, leading to CD3Z/CD247 phosphorylation modulation. Restricts the entry of murine coronavirus, mouse hepatitis virus, by interfering with spike protein-mediated membrane fusion. Also plays an essential role in placenta formation by acting as the main receptor for syncytin-A (SynA). Therefore, participates in the normal fusion of syncytiotrophoblast layer I (SynT-I) and in the proper morphogenesis of both fetal and maternal vasculatures within the placenta. May also act as a modulator of nicotinic acetylcholine receptors (nAChRs) activity. In vitro inhibits alpha-3:beta-4-containing nAChRs maximum response. The polypeptide is Lymphocyte antigen 6E (Mus musculus (Mouse)).